The following is a 70-amino-acid chain: Potassium channel toxin kappa-KTx 2.5 (70 aa).

Positions 1–26 (MESSRKSYVLMLFLAFVIMNVCSVSG) are cleaved as a signal peptide. The propeptide occupies 27–42 (EPKDGEIAGFEMEEAR). Disulfide bonds link C46/C64 and C50/C60.

The protein belongs to the short scorpion toxin superfamily. Potassium channel inhibitor kappa-KTx family. Kappa-KTx 2 subfamily. As to expression, expressed by the venom gland.

Its subcellular location is the secreted. In terms of biological role, voltage-independently blocks potassium currents on hKv1.1/KCNA1 (IC(50)=217 uM), and hKv1.4/KCNA4 (IC(50)=71 uM) (expressed in CHO cells). The sequence is that of Potassium channel toxin kappa-KTx 2.5 from Opisthacanthus cayaporum (South American scorpion).